We begin with the raw amino-acid sequence, 199 residues long: Prefoldin subunit 3 (199 aa).

An N-acetylmethionine modification is found at methionine 1.

Belongs to the prefoldin subunit alpha family. Heterohexamer of two PFD-alpha type and four PFD-beta type subunits.

Binds specifically to cytosolic chaperonin (c-CPN) and transfers target proteins to it. Binds to nascent polypeptide chain and promotes folding in an environment in which there are many competing pathways for nonnative proteins. The chain is Prefoldin subunit 3 (PAC10) from Saccharomyces cerevisiae (strain ATCC 204508 / S288c) (Baker's yeast).